Reading from the N-terminus, the 202-residue chain is ADP-ribosylation factor-like protein 15 (202 aa).

Residues Gly39 to Thr46, Glu82 to Ala86, and Asn142 to Asp145 contribute to the GTP site.

It belongs to the small GTPase superfamily. Arf family.

In Bos taurus (Bovine), this protein is ADP-ribosylation factor-like protein 15 (ARL15).